Here is a 285-residue protein sequence, read N- to C-terminus: (3S)-malyl-CoA thioesterase (285 aa).

Substrate contacts are provided by arginine 70 and glutamate 122. Mg(2+)-binding residues include glutamate 122 and aspartate 148.

This sequence belongs to the HpcH/HpaI aldolase family. As to quaternary structure, homodimer or homotrimer. It depends on Mg(2+) as a cofactor.

The catalysed reaction is (S)-malyl-CoA + H2O = (S)-malate + CoA + H(+). Catalyzes the hydrolysis of (3S)-malyl-CoA to (3S)-malate and free CoA. Inactive towards beta-methylmalyl-CoA and other CoA esters. This Cereibacter sphaeroides (strain KD131 / KCTC 12085) (Rhodobacter sphaeroides) protein is (3S)-malyl-CoA thioesterase.